Here is a 116-residue protein sequence, read N- to C-terminus: UPF0342 protein LBA1592 (116 aa).

This sequence belongs to the UPF0342 family.

The polypeptide is UPF0342 protein LBA1592 (Lactobacillus acidophilus (strain ATCC 700396 / NCK56 / N2 / NCFM)).